Here is a 491-residue protein sequence, read N- to C-terminus: Probable malate:quinone oxidoreductase (491 aa).

It belongs to the MQO family. The cofactor is FAD.

The catalysed reaction is (S)-malate + a quinone = a quinol + oxaloacetate. The protein operates within carbohydrate metabolism; tricarboxylic acid cycle; oxaloacetate from (S)-malate (quinone route): step 1/1. The sequence is that of Probable malate:quinone oxidoreductase from Leifsonia xyli subsp. xyli (strain CTCB07).